The primary structure comprises 256 residues: MLMIISPAKTLDYESPLATETHTQPDFLDDACELIDQLKELEPHQVSNLMSISDKLGQLNAERFQTWHTPFTPDNARQAVLAFKGDVYTGLDAESFSNEDFSFAQKHLRILSGLYGLLKPLDLMQPYRLEMGTRFENTRGKDLYAFWGSKITEALNQLLASDDKVLVNLASNEYFKSVQKKHLDARLVTPQFKDWKNGQYKMISFYAKKARGLMCRYAIQNRITQADDLKGFNLDGYYFSEDQSDNNNWVFLRDEQ.

Belongs to the UPF0246 family.

The chain is UPF0246 protein Maqu_2499 from Marinobacter nauticus (strain ATCC 700491 / DSM 11845 / VT8) (Marinobacter aquaeolei).